The primary structure comprises 788 residues: Endonuclease MutS2 (788 aa).

332–339 (GPNTGGKT) is an ATP binding site. Residues 713–788 (VDLRGMDAEE…GTGVTVVEIK (76 aa)) form the Smr domain.

It belongs to the DNA mismatch repair MutS family. MutS2 subfamily. Homodimer. Binds to stalled ribosomes, contacting rRNA.

Endonuclease that is involved in the suppression of homologous recombination and thus may have a key role in the control of bacterial genetic diversity. In terms of biological role, acts as a ribosome collision sensor, splitting the ribosome into its 2 subunits. Detects stalled/collided 70S ribosomes which it binds and splits by an ATP-hydrolysis driven conformational change. Acts upstream of the ribosome quality control system (RQC), a ribosome-associated complex that mediates the extraction of incompletely synthesized nascent chains from stalled ribosomes and their subsequent degradation. Probably generates substrates for RQC. The protein is Endonuclease MutS2 of Clostridium botulinum (strain 657 / Type Ba4).